A 335-amino-acid chain; its full sequence is Methionine import ATP-binding protein MetN 2 (335 aa).

The ABC transporter domain occupies 2–242 (IEFHNVHKTY…PQHSTTKRFV (241 aa)). An ATP-binding site is contributed by 38–45 (GHSGAGKS).

The protein belongs to the ABC transporter superfamily. Methionine importer (TC 3.A.1.24) family. As to quaternary structure, the complex is composed of two ATP-binding proteins (MetN), two transmembrane proteins (MetI) and a solute-binding protein (MetQ).

It is found in the cell inner membrane. It carries out the reaction L-methionine(out) + ATP + H2O = L-methionine(in) + ADP + phosphate + H(+). The enzyme catalyses D-methionine(out) + ATP + H2O = D-methionine(in) + ADP + phosphate + H(+). In terms of biological role, part of the ABC transporter complex MetNIQ involved in methionine import. Responsible for energy coupling to the transport system. The polypeptide is Methionine import ATP-binding protein MetN 2 (Pseudomonas syringae pv. tomato (strain ATCC BAA-871 / DC3000)).